The primary structure comprises 116 residues: UPF0298 protein EF_2453 (116 aa).

This sequence belongs to the UPF0298 family.

It is found in the cytoplasm. This is UPF0298 protein EF_2453 from Enterococcus faecalis (strain ATCC 700802 / V583).